Here is a 130-residue protein sequence, read N- to C-terminus: Ribosome biogenesis inhibitor MINAS-60 (130 aa).

The segment at 61–130 is disordered; the sequence is SKVQRIPTRP…RRRRPVTSSC (70 aa). Positions 109-130 are enriched in basic residues; the sequence is KGRRRRRRMRRRRRRRPVTSSC.

Interacts with 60S ribosome assembly factors GTPBP4 and MRTO4.

Its subcellular location is the nucleus. It is found in the nucleolus. Functionally, acts as a late-stage inhibitor of pre-60S ribosome assembly by preventing pre-60S ribosome export from nucleus. The protein is Ribosome biogenesis inhibitor MINAS-60 of Mus musculus (Mouse).